A 182-amino-acid chain; its full sequence is CASP-like protein 2B1 (182 aa).

Over 1-12 (MKLIDRRMRLTE) the chain is Cytoplasmic. A helical membrane pass occupies residues 13–31 (LLLRCSISVFALLALILVV). Residues 32-52 (TDTEVKLIFTIKKTAKYTDMK) lie on the Extracellular side of the membrane. A helical membrane pass occupies residues 53-73 (AVVFLVVANGIAAVYSLLQSV). Topologically, residues 74-89 (RCVVGTMKGRVLFSKP) are cytoplasmic. Residues 90 to 110 (LAWAFFSGDQAMAYLNVAAIA) form a helical membrane-spanning segment. Residues 111–141 (ATAESGVIAREGEEDLQWMRVCNMYGKFCNQ) lie on the Extracellular side of the membrane. A helical transmembrane segment spans residues 142–162 (MAIGVSSALLASIAMVFVSCI). The Cytoplasmic segment spans residues 163-182 (SAFSLFRLYGATRDRRTTPW).

The protein belongs to the Casparian strip membrane proteins (CASP) family. Homodimer and heterodimers.

The protein localises to the cell membrane. This is CASP-like protein 2B1 from Arabidopsis lyrata subsp. lyrata (Lyre-leaved rock-cress).